The following is a 159-amino-acid chain: Nucleotide-binding protein PSPPH_4093 (159 aa).

Belongs to the YajQ family.

Nucleotide-binding protein. In Pseudomonas savastanoi pv. phaseolicola (strain 1448A / Race 6) (Pseudomonas syringae pv. phaseolicola (strain 1448A / Race 6)), this protein is Nucleotide-binding protein PSPPH_4093.